A 347-amino-acid chain; its full sequence is NADH-ubiquinone oxidoreductase chain 2 (347 aa).

The next 9 helical transmembrane spans lie at 3–23 (PMTF…VMMS), 59–79 (YFLT…INLL), 89–109 (LINP…LGLA), 150–170 (NLNI…WGGL), 178–198 (IMAY…MYNP), 201–221 (MLLN…LLMI), 237–257 (LPLI…LPPL), 276–296 (IILS…YTRI), and 326–346 (LPLM…TAIL).

It belongs to the complex I subunit 2 family. As to quaternary structure, core subunit of respiratory chain NADH dehydrogenase (Complex I) which is composed of 45 different subunits. Interacts with TMEM242.

It localises to the mitochondrion inner membrane. It carries out the reaction a ubiquinone + NADH + 5 H(+)(in) = a ubiquinol + NAD(+) + 4 H(+)(out). In terms of biological role, core subunit of the mitochondrial membrane respiratory chain NADH dehydrogenase (Complex I) which catalyzes electron transfer from NADH through the respiratory chain, using ubiquinone as an electron acceptor. Essential for the catalytic activity and assembly of complex I. This chain is NADH-ubiquinone oxidoreductase chain 2, found in Nyctophilus arnhemensis (Northern long-eared bat).